A 446-amino-acid chain; its full sequence is MGPLLQLAGTRLHIGIDDTDSIKGMCTTYLGFRLARLLQKEGAEFEDYPRLVRLNPNVPWKTRGNGAVGMTVNVSDPEAARKIAIDAVSLYSDLENGANPAAVFCEGGIPQPVRDLSREALHVMVEQERARGIIERHCSGLFYTGSGQGMVGAAAAIGYEFGDSTLELLSYRREENRGTPRPIWPEDVRGIQGAYPDTFNSYDEARGTSIIAPRGPDPVFYGIRGELASSLLGASEMVRTPERLEGYMIYRSNQGTADHLEYVIDAADPRPYSSGTISGVISTEPVVREGGHVFFEINAGGSMVPCAVYKESGMTDAAALLRGGDKVVVGGGIRRESGSHPKVLNVEFARVERLARIYRMANPYCTKCSKSMKSKGIGQGFKCTRCGAASIHRVEREIPRGISVGLYLPVASSQRHLARPYGRQGRTSRIQFDGASPWLGVFDSGE.

This sequence belongs to the TiaS family.

The protein localises to the cytoplasm. The enzyme catalyses cytidine(34) in tRNA(Ile2) + agmatine + ATP + H2O = 2-agmatinylcytidine(34) in tRNA(Ile2) + AMP + 2 phosphate + 2 H(+). Its function is as follows. ATP-dependent agmatine transferase that catalyzes the formation of 2-agmatinylcytidine (agm2C) at the wobble position (C34) of tRNA(Ile2), converting the codon specificity from AUG to AUA. This Cenarchaeum symbiosum (strain A) protein is tRNA(Ile2) 2-agmatinylcytidine synthetase TiaS.